We begin with the raw amino-acid sequence, 439 residues long: Eukaryotic translation initiation factor 2 subunit gamma (439 aa).

Residues 11 to 215 (QATLNIGTIG…FIVNYIPEPV (205 aa)) form the tr-type G domain. The tract at residues 20-27 (GHVAHGKS) is G1. 23–28 (AHGKST) is a binding site for GTP. Residues 48–52 (NITIK) are G2. The tract at residues 103–106 (DCPG) is G3. GTP contacts are provided by residues 159–162 (NKID) and 193–195 (AAQ). The segment at 159–162 (NKID) is G4. The tract at residues 193–195 (AAQ) is G5. Residues 415-427 (GEIKDGTCIEPEY) form an interacts with CDC123 region.

This sequence belongs to the TRAFAC class translation factor GTPase superfamily. Classic translation factor GTPase family. EIF2G subfamily. Eukaryotic translation initiation factor 2 eIF2 is a heterotrimeric complex composed of an alpha, a beta and a gamma subunit. The factors eIF-1, eIF-2, eIF-3, TIF5/eIF-5 and methionyl-tRNAi form a multifactor complex (MFC) that may bind to the 40S ribosome.

The protein localises to the cytoplasm. It is found in the cytosol. It carries out the reaction GTP + H2O = GDP + phosphate + H(+). In terms of biological role, as a subunit of eukaryotic initiation factor 2 eIF2, involved in the early steps of protein synthesis. In the presence of GTP, eIF-2 forms a ternary complex with initiator tRNA Met-tRNAi and then recruits the 40S ribosomal complex and initiation factors eIF-1, eIF-1A and eIF-3 to form the 43S pre-initiation complex (43S PIC), a step that determines the rate of protein translation. The 43S PIC binds to mRNA and scans downstream to the initiation codon, where it forms a 48S initiation complex by codon-anticodon base pairing. This leads to the displacement of eIF-1 to allow GTPase-activating protein (GAP) eIF-5-mediated hydrolysis of eIF2-bound GTP. Hydrolysis of GTP and release of Pi, which makes GTP hydrolysis irreversible, causes the release of the eIF-2-GDP binary complex from the 40S subunit, an event that is essential for the subsequent joining of the 60S ribosomal subunit to form an elongation-competent 80S ribosome. In order for eIF-2 to recycle and catalyze another round of initiation, the GDP bound to eIF-2 must be exchanged with GTP by way of a reaction catalyzed by GDP-GTP exchange factor (GEF) eIF-2B. This Encephalitozoon cuniculi (strain GB-M1) (Microsporidian parasite) protein is Eukaryotic translation initiation factor 2 subunit gamma.